A 1587-amino-acid chain; its full sequence is Pentafunctional AROM polypeptide (1587 aa).

Residues 1–384 are 3-dehydroquinate synthase; that stretch reads MIEPTKISIL…YEPRASVVAN (384 aa). NAD(+) is bound by residues 44–46, 81–84, 114–116, and aspartate 119; these read DTN, EVSK, and GGV. Arginine 130 contacts 7-phospho-2-dehydro-3-deoxy-D-arabino-heptonate. 139-140 serves as a coordination point for NAD(+); that stretch reads TT. Positions 146 and 152 each coordinate 7-phospho-2-dehydro-3-deoxy-D-arabino-heptonate. Lysine 161 lines the NAD(+) pocket. 7-phospho-2-dehydro-3-deoxy-D-arabino-heptonate is bound at residue asparagine 162. NAD(+) is bound by residues 179 to 182 and asparagine 190; that span reads FLET. Residue glutamate 194 participates in Zn(2+) binding. 7-phospho-2-dehydro-3-deoxy-D-arabino-heptonate is bound by residues 194–197 and lysine 250; that span reads EVIK. The active-site Proton acceptor; for 3-dehydroquinate synthase activity is the glutamate 260. Residues 264-268 and histidine 271 each bind 7-phospho-2-dehydro-3-deoxy-D-arabino-heptonate; that span reads RNLLN. Position 271 (histidine 271) interacts with Zn(2+). Histidine 275 functions as the Proton acceptor; for 3-dehydroquinate synthase activity in the catalytic mechanism. 7-phospho-2-dehydro-3-deoxy-D-arabino-heptonate contacts are provided by histidine 287 and lysine 356. Zn(2+) is bound at residue histidine 287. Positions 397 to 842 are EPSP synthase; the sequence is VFPGVSPKST…WDTLRLKFAV (446 aa). The active-site For EPSP synthase activity is the cysteine 824. The interval 864 to 1055 is shikimate kinase; it reads SASVFIIGMR…KKKQHSFFVS (192 aa). ATP is bound at residue 871 to 878; that stretch reads GMRGAGKT. The segment at 1056–1276 is 3-dehydroquinase; that stretch reads LTLPDLRPAG…AAPGQLSATE (221 aa). The Proton acceptor; for 3-dehydroquinate dehydratase activity role is filled by histidine 1179. Lysine 1207 serves as the catalytic Schiff-base intermediate with substrate; for 3-dehydroquinate dehydratase activity. Residues 1289–1587 form a shikimate dehydrogenase region; that stretch reads KKRFALFGTP…RDAVLGTKAD (299 aa).

The protein in the N-terminal section; belongs to the sugar phosphate cyclases superfamily. Dehydroquinate synthase family. In the 2nd section; belongs to the EPSP synthase family. It in the 3rd section; belongs to the shikimate kinase family. This sequence in the 4th section; belongs to the type-I 3-dehydroquinase family. The protein in the C-terminal section; belongs to the shikimate dehydrogenase family. In terms of assembly, homodimer. The cofactor is Zn(2+).

Its subcellular location is the cytoplasm. It carries out the reaction 7-phospho-2-dehydro-3-deoxy-D-arabino-heptonate = 3-dehydroquinate + phosphate. It catalyses the reaction 3-dehydroquinate = 3-dehydroshikimate + H2O. The enzyme catalyses shikimate + NADP(+) = 3-dehydroshikimate + NADPH + H(+). The catalysed reaction is shikimate + ATP = 3-phosphoshikimate + ADP + H(+). It carries out the reaction 3-phosphoshikimate + phosphoenolpyruvate = 5-O-(1-carboxyvinyl)-3-phosphoshikimate + phosphate. It participates in metabolic intermediate biosynthesis; chorismate biosynthesis; chorismate from D-erythrose 4-phosphate and phosphoenolpyruvate: step 2/7. Its pathway is metabolic intermediate biosynthesis; chorismate biosynthesis; chorismate from D-erythrose 4-phosphate and phosphoenolpyruvate: step 3/7. The protein operates within metabolic intermediate biosynthesis; chorismate biosynthesis; chorismate from D-erythrose 4-phosphate and phosphoenolpyruvate: step 4/7. It functions in the pathway metabolic intermediate biosynthesis; chorismate biosynthesis; chorismate from D-erythrose 4-phosphate and phosphoenolpyruvate: step 5/7. It participates in metabolic intermediate biosynthesis; chorismate biosynthesis; chorismate from D-erythrose 4-phosphate and phosphoenolpyruvate: step 6/7. Functionally, the AROM polypeptide catalyzes 5 consecutive enzymatic reactions in prechorismate polyaromatic amino acid biosynthesis. The polypeptide is Pentafunctional AROM polypeptide (Aspergillus clavatus (strain ATCC 1007 / CBS 513.65 / DSM 816 / NCTC 3887 / NRRL 1 / QM 1276 / 107)).